The sequence spans 339 residues: Ferredoxin--NADP reductase (339 aa).

7 residues coordinate FAD: aspartate 36, glutamine 44, tyrosine 49, valine 89, phenylalanine 123, aspartate 290, and threonine 331.

Belongs to the ferredoxin--NADP reductase type 2 family. Homodimer. FAD serves as cofactor.

It catalyses the reaction 2 reduced [2Fe-2S]-[ferredoxin] + NADP(+) + H(+) = 2 oxidized [2Fe-2S]-[ferredoxin] + NADPH. The chain is Ferredoxin--NADP reductase from Acidiphilium cryptum (strain JF-5).